Consider the following 248-residue polypeptide: Adenosylcobinamide-GDP ribazoletransferase (248 aa).

The next 5 membrane-spanning stretches (helical) occupy residues 30 to 50 (LAES…CYAL), 54 to 74 (VLSG…LTAV), 112 to 132 (FGAL…DAVI), 134 to 154 (AGSF…MVLA), and 188 to 208 (AVSA…LAAG).

Belongs to the CobS family. The cofactor is Mg(2+).

The protein resides in the cell inner membrane. The catalysed reaction is alpha-ribazole + adenosylcob(III)inamide-GDP = adenosylcob(III)alamin + GMP + H(+). It carries out the reaction alpha-ribazole 5'-phosphate + adenosylcob(III)inamide-GDP = adenosylcob(III)alamin 5'-phosphate + GMP + H(+). Its pathway is cofactor biosynthesis; adenosylcobalamin biosynthesis; adenosylcobalamin from cob(II)yrinate a,c-diamide: step 7/7. Joins adenosylcobinamide-GDP and alpha-ribazole to generate adenosylcobalamin (Ado-cobalamin). Also synthesizes adenosylcobalamin 5'-phosphate from adenosylcobinamide-GDP and alpha-ribazole 5'-phosphate. This chain is Adenosylcobinamide-GDP ribazoletransferase, found in Syntrophobacter fumaroxidans (strain DSM 10017 / MPOB).